The chain runs to 938 residues: Microperfuranone synthase (938 aa).

The interval 44–445 (TSTRISYAEL…AGRTKDTIIV (402 aa)) is adenylation (A) domain. One can recognise a Carrier domain in the interval 579-655 (SDSERAVQKA…AIARSIDSSR (77 aa)). A thiolation and peptide carrier (T) domain region spans residues 581–652 (SERAVQKALV…TPGAIARSID (72 aa)). Position 613 is an O-(pantetheine 4'-phosphoryl)serine (serine 613). Residues 676–923 (PLFCIHPGSG…AKMLNREHIA (248 aa)) are thioesterase (TE) domain. Serine 746 is a catalytic residue.

Belongs to the ATP-dependent AMP-binding enzyme family.

The protein operates within secondary metabolite biosynthesis. In terms of biological role, microperfuranone synthase is the only protein required for the biosynthesis of the secondary metabolite microperfuranone from phenylpyruvic acid (PPA). Several steps for the microperfuranione biosynthesis have been proposed. These steps include the activation of PPA, by the micA adenylation (A) domain to AMP-phenylpyruvic acid followed by loading of the PPA unit to the thiolation and peptide carrier (T) domain and eventually transferring to the thioesterase (TE) domain. After loading another PPA unit onto the T domain, aldol condensation establishes the carbon-carbon bond between the alpha- and beta-carbon of the two PPA units. Sulfur-assisted furan ring formation, TE domain mediated hydrolysis, decarboxylation, and keto-enol tautomerization would generate microperfuranone attached to the T domain. Finally, microperfuranone is released by the TE domain. This chain is Microperfuranone synthase, found in Emericella nidulans (strain FGSC A4 / ATCC 38163 / CBS 112.46 / NRRL 194 / M139) (Aspergillus nidulans).